The following is a 37-amino-acid chain: Large ribosomal subunit protein bL36 (37 aa).

The protein belongs to the bacterial ribosomal protein bL36 family.

The polypeptide is Large ribosomal subunit protein bL36 (Beutenbergia cavernae (strain ATCC BAA-8 / DSM 12333 / CCUG 43141 / JCM 11478 / NBRC 16432 / NCIMB 13614 / HKI 0122)).